A 436-amino-acid polypeptide reads, in one-letter code: MRQALPLVTRQGDRIAIVSGLRTPFARQATAFHGIPAVDLGKMVVGELLARSEIPADAIEQLVFGQVVQMPEAPNIAREIVLGTGMNVHTDAYSVSRACATSFQAVANVAESLMAGTIRAGIAGGADSSSVLPIGVSKALARVLVDVNKARTTRQRLTLFSRLRLRDLLPVPPAVAEYSTGLRMGDTAEQMAKTYGITREQQDALAHRSHQRAAQAWAEGKLAEEVMTTYVPPYKNPFTEDNNIRGTSTLADYAKLRPAFDRKHGSVTAANSTPLTDGAAAVILMTESRAKELGLRPLGYLRSYAFTAIDVWQDMLLGPAWSTPLALERAGLTMADLTLFDMHEAFAAQTLANLQLLGSERFAREVLGRAQATGEVDDAKFNVLGGSIAYGHPFAATGARMITQTLHELRRRGGGFGLVTACAAGGLGAAMVLEAE.

The Acyl-thioester intermediate role is filled by cysteine 99. Catalysis depends on proton acceptor residues histidine 392 and cysteine 422.

The protein belongs to the thiolase-like superfamily. Thiolase family. In terms of assembly, heterotetramer of two alpha chains (FadJ) and two beta chains (FadI).

Its subcellular location is the cytoplasm. The enzyme catalyses an acyl-CoA + acetyl-CoA = a 3-oxoacyl-CoA + CoA. The protein operates within lipid metabolism; fatty acid beta-oxidation. Functionally, catalyzes the final step of fatty acid oxidation in which acetyl-CoA is released and the CoA ester of a fatty acid two carbons shorter is formed. This Salmonella choleraesuis (strain SC-B67) protein is 3-ketoacyl-CoA thiolase.